Consider the following 1637-residue polypeptide: Acrosomal protein KIAA1210 (1637 aa).

Disordered regions lie at residues 44–121 (RFSS…LSIS), 141–293 (RTTT…KNEW), 341–404 (PTTT…KKKD), 438–759 (VCGE…SQSE), 865–896 (PKLP…EGST), 935–975 (SKYS…FQPL), 1017–1057 (LQPW…IPSQ), 1090–1137 (FPFQ…SRRA), 1182–1238 (SQTI…SKSF), and 1539–1558 (NKGD…PAFS). Over residues 103–114 (HRSKSLKIKSQR) the composition is skewed to basic residues. The span at 141–156 (RTTTTFRRRSSQCSST) shows a compositional bias: low complexity. Over residues 170-190 (SESSTQQFSGFSTPATSQGCL) the composition is skewed to polar residues. Residues 229 to 249 (AKEKTTTKTKEAEQGEQKVDS) are compositionally biased toward basic and acidic residues. The span at 250 to 261 (TELSSQEQSSKT) shows a compositional bias: low complexity. Residues 341-353 (PTTTEAEVTTVQK) show a composition bias toward polar residues. Over residues 355 to 374 (PSDKGDVERELADIDVEAQK) the composition is skewed to basic and acidic residues. Positions 508 to 526 (TGETSSDSKSTSEYESSSE) are enriched in low complexity. The span at 550 to 572 (ADDEEDGDDEKEEKDNDDDDEEN) shows a compositional bias: acidic residues. Residues 689–698 (DLSSSEQEQQ) are compositionally biased toward low complexity. Polar residues-rich tracts occupy residues 745-759 (SPTQ…SQSE), 879-896 (GKQS…EGST), 935-956 (SKYS…STSA), 964-975 (SQPSVTPKFQPL), and 1017-1030 (LQPW…QVSV).

In terms of assembly, interacts with TOP2B. In terms of tissue distribution, predominantly expressed in testis (at protein level).

Its subcellular location is the cytoplasmic vesicle. The protein resides in the secretory vesicle. It is found in the acrosome. In Mus musculus (Mouse), this protein is Acrosomal protein KIAA1210.